The chain runs to 692 residues: MAREFSLAKTRNIGIMAHVDAGKTTTTERILYYTGKIHKIGETHEGASQMDWMEQEQERGITITSAATTAQWDGHRVNIIDTPGHVDFTIEVQRSLRVLDGAVTVLDSQSGVEPQTETVWRQATEYGVPRIVFANKMDKIGADFLYSVQTLHDRLQANAHPIQLPIGSEDDFRGIIDLIKMKAEIYTNDLGTDILEEDIPEEYLEQAQEYREKLIEAVAETDEDLMMKYLEGEEITNEELVAGIRKATINVEFFPVLCGSAFKNKGVQLMLDAVIAYLPSPLDIPAIKGVNPDTDAEEERPASDEEPFAALAFKIMTDPFVGRLTFFRVYSGVLNSGSYVMNTSKGKRERIGRILQMHANSRQEIETVYAGDIAAAVGLKDTTTGDSLTDEKAKIILESIEVPEPVIQLMVEPKSKADQDKMGIALQKLAEEDPTFRVETNVETGETVIAGMGELHLDVLVDRMRREFKVEANVGAPQVSYRETFRASTQARGFFKRQSGGKGQFGDVWIEFTPNEEGKGFEFENAIVGGVVPREFIPAVEKGLIESMANGVLAGYPMVDVKAKLYDGSYHDVDSSETAFKIAASLALKEAAKTAQPAILEPMMLVTITAPEDNLGDVMGHVTARRGRVDGMEAHGTSQIVRAYVPLAEMFGYATVLRSATQGRGTFMMVFDHYEDVPKSVQEEIIKKNKGE.

Residues 8-282 form the tr-type G domain; sequence AKTRNIGIMA…AVIAYLPSPL (275 aa). GTP contacts are provided by residues 17 to 24, 81 to 85, and 135 to 138; these read AHVDAGKT, DTPGH, and NKMD.

The protein belongs to the TRAFAC class translation factor GTPase superfamily. Classic translation factor GTPase family. EF-G/EF-2 subfamily.

The protein resides in the cytoplasm. Catalyzes the GTP-dependent ribosomal translocation step during translation elongation. During this step, the ribosome changes from the pre-translocational (PRE) to the post-translocational (POST) state as the newly formed A-site-bound peptidyl-tRNA and P-site-bound deacylated tRNA move to the P and E sites, respectively. Catalyzes the coordinated movement of the two tRNA molecules, the mRNA and conformational changes in the ribosome. This Streptococcus equi subsp. equi (strain 4047) protein is Elongation factor G.